Consider the following 318-residue polypeptide: Methionyl-tRNA formyltransferase (318 aa).

S112–P115 is a binding site for (6S)-5,6,7,8-tetrahydrofolate.

This sequence belongs to the Fmt family.

It carries out the reaction L-methionyl-tRNA(fMet) + (6R)-10-formyltetrahydrofolate = N-formyl-L-methionyl-tRNA(fMet) + (6S)-5,6,7,8-tetrahydrofolate + H(+). Attaches a formyl group to the free amino group of methionyl-tRNA(fMet). The formyl group appears to play a dual role in the initiator identity of N-formylmethionyl-tRNA by promoting its recognition by IF2 and preventing the misappropriation of this tRNA by the elongation apparatus. In Shewanella baltica (strain OS223), this protein is Methionyl-tRNA formyltransferase.